Consider the following 720-residue polypeptide: Pollen receptor-like kinase 1 (720 aa).

The LRR 1; degenerate repeat unit spans residues 40 to 64 (LCSRGHLLIIFLLLVSPFNDAAVDV). Residues 123-146 (LGVLCYEGDVWGLQLENLDLSGVI) form an LRR 2; degenerate repeat. 3 LRR repeats span residues 154–179 (LHFL…SLEP), 226–248 (LPQV…HFPP), and 249–273 (NVLK…SLMD). The interval 288–319 (LESACNSPSQEANNPDSRNSSTISGQSSTDVI) is disordered. The segment covering 291 to 317 (ACNSPSQEANNPDSRNSSTISGQSSTD) has biased composition (polar residues). The chain crosses the membrane as a helical span at residues 330–350 (MLIVAVCLVVLCLLIVLILII). Polar residues-rich tracts occupy residues 356–382 (SSSQ…TSSA) and 389–405 (LSGN…NSNK). The segment at 356-409 (SSSQNPQPVESNYSNNDRDQNAFTSSAPDDHVTLSGNSTYSNNQHSNSNKAEAP) is disordered. Positions 434-702 (RASAEVLGSG…KEVVQSIQSL (269 aa)) constitute a Protein kinase domain. Residues 440-448 (LGSGNLGSS) and K462 each bind ATP.

It belongs to the protein kinase superfamily. In terms of assembly, interacts with KIP1. In terms of processing, autophosphorylated. Expressed in mature pollen grains and pollen tubes, but not in style, petal, leaf, root or sepal. Very low expression in the ovary.

The protein resides in the microsome membrane. The protein localises to the cytoplasm. It catalyses the reaction L-seryl-[protein] + ATP = O-phospho-L-seryl-[protein] + ADP + H(+). The enzyme catalyses L-threonyl-[protein] + ATP = O-phospho-L-threonyl-[protein] + ADP + H(+). The catalysed reaction is L-tyrosyl-[protein] + ATP = O-phospho-L-tyrosyl-[protein] + ADP + H(+). In terms of biological role, dual-specificity kinase with both serine/threonine and tyrosine kinase activities. Required for postmeiotic development of microspores. Involved in embryo sac development at the late stages of megagametogenesis. Involved in the phosphorylation of KIP1. The protein is Pollen receptor-like kinase 1 of Petunia integrifolia (Violet-flowered petunia).